The sequence spans 178 residues: Large ribosomal subunit protein uL6 (178 aa).

This sequence belongs to the universal ribosomal protein uL6 family. As to quaternary structure, part of the 50S ribosomal subunit.

Its function is as follows. This protein binds to the 23S rRNA, and is important in its secondary structure. It is located near the subunit interface in the base of the L7/L12 stalk, and near the tRNA binding site of the peptidyltransferase center. The polypeptide is Large ribosomal subunit protein uL6 (Campylobacter jejuni subsp. jejuni serotype O:2 (strain ATCC 700819 / NCTC 11168)).